The primary structure comprises 300 residues: Cation-efflux pump FieF (300 aa).

Helical transmembrane passes span 12–32 (AALA…FAWW), 39–59 (ILAA…NLLV), 82–102 (AALA…LTGI), and 114–134 (PLVG…LVTF). Residues aspartate 45 and aspartate 49 each coordinate Zn(2+). 2 residues coordinate Zn(2+): histidine 153 and aspartate 157. A run of 2 helical transmembrane segments spans residues 156 to 176 (SDVM…YGLH) and 182 to 202 (FALG…YEAI).

The protein belongs to the cation diffusion facilitator (CDF) transporter (TC 2.A.4) family. FieF subfamily. Homodimer.

The protein resides in the cell inner membrane. The catalysed reaction is Zn(2+)(in) + H(+)(out) = Zn(2+)(out) + H(+)(in). It catalyses the reaction Cd(2+)(in) + H(+)(out) = Cd(2+)(out) + H(+)(in). It carries out the reaction Fe(2+)(in) + H(+)(out) = Fe(2+)(out) + H(+)(in). Functionally, divalent metal cation transporter which exports Zn(2+), Cd(2+) and possibly Fe(2+). May be involved in zinc and iron detoxification by efflux. This is Cation-efflux pump FieF from Cronobacter sakazakii (strain ATCC BAA-894) (Enterobacter sakazakii).